The chain runs to 121 residues: Large ribosomal subunit protein bL19 (121 aa).

This sequence belongs to the bacterial ribosomal protein bL19 family.

Functionally, this protein is located at the 30S-50S ribosomal subunit interface and may play a role in the structure and function of the aminoacyl-tRNA binding site. This is Large ribosomal subunit protein bL19 from Borrelia garinii subsp. bavariensis (strain ATCC BAA-2496 / DSM 23469 / PBi) (Borreliella bavariensis).